Reading from the N-terminus, the 442-residue chain is Putative major teichoic acid biosynthesis protein C (442 aa).

Unknown. Might be involved in poly(glycerol phosphate) teichoic acid biosynthesis. The protein is Putative major teichoic acid biosynthesis protein C (tagC) of Bacillus subtilis (strain 168).